We begin with the raw amino-acid sequence, 122 residues long: Large ribosomal subunit protein uL14 (122 aa).

It belongs to the universal ribosomal protein uL14 family. As to quaternary structure, part of the 50S ribosomal subunit. Forms a cluster with proteins L3 and L19. In the 70S ribosome, L14 and L19 interact and together make contacts with the 16S rRNA in bridges B5 and B8.

Its function is as follows. Binds to 23S rRNA. Forms part of two intersubunit bridges in the 70S ribosome. This Helicobacter hepaticus (strain ATCC 51449 / 3B1) protein is Large ribosomal subunit protein uL14.